A 685-amino-acid polypeptide reads, in one-letter code: Transforming growth factor beta activator LRRC33 (685 aa).

An N-terminal signal peptide occupies residues 1-27 (MPVCGCLSVVLSHAVVLLMLVLHSASG). The Extracellular portion of the chain corresponds to 28–640 (HPQTFPCRLI…CGFTNNNKES (613 aa)). An LRRNT domain is found at 29–56 (PQTFPCRLIQRVALCSGRQLSVIPDCLP). LRR repeat units follow at residues 57–79 (HETEEIFFDRNLLENLQDGLSRY), 80–102 (PFLRMFSCANNQLMTVAETAFIE), 103–129 (SHLLENLNLANNELHHGHKQVAQAFRS), 130–154 (LTQLKTLDLSGNGLSEDMVSVLVAN), 155–178 (LSSLESLYLSRNGMQRLDESTFRD), 180–201 (HQLKELNVERNLLFEISGAFDH), and 202–225 (MKKLQRLNLAFNCLPCLVNFEMTQ). Asn154 carries an N-linked (GlcNAc...) asparagine glycan. N-linked (GlcNAc...) asparagine glycans are attached at residues Asn230 and Asn244. 2 LRR repeats span residues 248-271 (TFQLETLDLSDNHLLFFPFLPTNN) and 273-296 (IRTLLLSNNRVGFYQHLANSTSSN). Asn291, Asn296, Asn309, Asn312, and Asn325 each carry an N-linked (GlcNAc...) asparagine glycan. LRR repeat units follow at residues 326 to 349 (LSSVEFLDLSENKVNYFPQGFIKQ), 351 to 373 (PQLYWLKLRSNCLQSFSLTSEDL), 374 to 397 (PVTIYELDVSRNRLTEIKASQTSK), 400 to 423 (LNNLTHLNLSTNDLQNFPPMIFTS), 425 to 447 (PNLNTLDLSHNTVDVCYSSNYMG), 457 to 480 (MASLKQLYLADCSIQNVPSSAFKG), 482 to 503 (SLTHLELSNNPNLHLKQQSLKG), 505 to 526 (ANTLQHLGIGNTGLQDFDFSPY), 527 to 549 (TNLKSLNISRNSLSKLPDSLMAL), 551 to 571 (LKLLDLRDNSLTTIKSEHASL), and 573 to 596 (AKKLQTVYMNGNAFNCCHLDWFRT). Asn402 and Asn407 each carry an N-linked (GlcNAc...) asparagine glycan. Residue Asn533 is glycosylated (N-linked (GlcNAc...) asparagine). An LRRCT domain is found at 597–635 (FGENKGIHVADLSEITCLDLNYRRHKVVLTDAVYCGFTN). Residues 641-661 (VVWYILLFVTVSVSIMGISVI) traverse the membrane as a helical segment. At 662 to 685 (YMLTFKPRMLPRVIKKKCWRPTSY) the chain is on the cytoplasmic side.

The protein belongs to the LRRC32/LRRC33 family.

Its subcellular location is the cell membrane. The protein resides in the endoplasmic reticulum membrane. Functionally, key regulator of transforming growth factor beta-1 (TGFB1) specifically required for microglia function in the nervous system. Required for activation of latent TGF-beta-1 in macrophages and microglia: associates specifically via disulfide bonds with the Latency-associated peptide (LAP), which is the regulatory chain of TGFB1, and regulates integrin-dependent activation of TGF-beta-1. TGF-beta-1 activation mediated by lrrc33/nrros is highly localized: there is little spreading of TGF-beta-1 activated from one microglial cell to neighboring microglia, suggesting the existence of localized and selective activation of TGF-beta-1 by lrrc33/nrros. In Danio rerio (Zebrafish), this protein is Transforming growth factor beta activator LRRC33.